Consider the following 435-residue polypeptide: Ribulose bisphosphate carboxylase large chain (435 aa).

Position 5 is an N6,N6,N6-trimethyllysine (K5). N114 and T164 together coordinate substrate. K166 (proton acceptor) is an active-site residue. Residue K168 participates in substrate binding. K192, D194, and E195 together coordinate Mg(2+). K192 is modified (N6-carboxylysine). H285 functions as the Proton acceptor in the catalytic mechanism. Positions 286, 318, and 370 each coordinate substrate.

The protein belongs to the RuBisCO large chain family. Type I subfamily. Heterohexadecamer of 8 large chains and 8 small chains; disulfide-linked. The disulfide link is formed within the large subunit homodimers. Requires Mg(2+) as cofactor. Post-translationally, the disulfide bond which can form in the large chain dimeric partners within the hexadecamer appears to be associated with oxidative stress and protein turnover.

It is found in the plastid. It localises to the chloroplast. It catalyses the reaction 2 (2R)-3-phosphoglycerate + 2 H(+) = D-ribulose 1,5-bisphosphate + CO2 + H2O. The catalysed reaction is D-ribulose 1,5-bisphosphate + O2 = 2-phosphoglycolate + (2R)-3-phosphoglycerate + 2 H(+). RuBisCO catalyzes two reactions: the carboxylation of D-ribulose 1,5-bisphosphate, the primary event in carbon dioxide fixation, as well as the oxidative fragmentation of the pentose substrate in the photorespiration process. Both reactions occur simultaneously and in competition at the same active site. The protein is Ribulose bisphosphate carboxylase large chain of Drosera burmannii (Burmese sundew).